The primary structure comprises 215 residues: High mobility group protein B1 (215 aa).

M1–R10 lines the heparin pocket. The segment at M1–R97 is sufficient for interaction with HAVCR2. An N6-acetyllysine mark is found at K3, K7, K8, and K12. Residues K3–S15 form an LPS binding (delipidated) region. Positions P9–I79 form a DNA-binding region, HMG box 1. Position 23 is a cysteine sulfonic acid (-SO3H); alternate (C23). Residues C23 and C45 are joined by a disulfide bond. Positions H27–K43 are NLS 1. The short motif at H27–K43 is the Nuclear localization signal (NLS) 1 element. 3 positions are modified to N6-acetyllysine: K28, K29, and K30. Residue K28 forms an Isoglutamyl lysine isopeptide (Lys-Gln) (interchain with Q-?) linkage. A Phosphoserine modification is found at S35. K43 carries the N6-acetyllysine modification. Residues K43 and K44 each participate in an isoglutamyl lysine isopeptide (Lys-Gln) (interchain with Q-?) cross-link. Position 45 is a cysteine sulfonic acid (-SO3H); alternate (C45). K68 is covalently cross-linked (Isoglutamyl lysine isopeptide (Lys-Gln) (interchain with Q-?)). The interval K76 to P95 is disordered. An LPS binding (Lipid A) region spans residues P80 to K96. The span at G83 to A94 shows a compositional bias: basic and acidic residues. Residues F89–E108 are cytokine-stimulating activity. K90 carries the post-translational modification N6-acetyllysine. The HMG box 2 DNA-binding region spans P95–R163. Phosphoserine is present on S100. Residue C106 is modified to Cysteine sulfonic acid (-SO3H). N6-acetyllysine occurs at positions 127, 128, 141, 172, 173, 177, and 180. The interval K150 to K183 is binding to AGER/RAGE. Over residues A161–E179 the composition is skewed to basic and acidic residues. A disordered region spans residues A161–E215. The segment at A178–K184 is NLS 2. A Nuclear localization signal (NLS) 2 motif is present at residues A178–K184. K180 is covalently cross-linked (Isoglutamyl lysine isopeptide (Lys-Gln) (interchain with Q-?)). At S181 the chain carries ADP-ribosylserine. N6-acetyllysine occurs at positions 182, 183, 184, and 185. Residues K182, K183, and K184 each participate in an isoglutamyl lysine isopeptide (Lys-Gln) (interchain with Q-?) cross-link. The segment covering E187–E215 has biased composition (acidic residues).

The protein belongs to the HMGB family. Interacts (fully reduced HMGB1) with CXCL12; probably in a 1:2 ratio involving two molecules of CXCL12, each interacting with one HMG box of HMGB1; inhibited by glycyrrhizin. Associates with the TLR4:LY96 receptor complex. Component of the RAG complex composed of core components RAG1 and RAG2, and associated component HMGB1 or HMGB2. Interacts (in cytoplasm upon starvation) with BECN1; inhibits the interaction of BECN1 and BCL2 leading to promotion of autophagy. Interacts with KPNA1; involved in nuclear import. Interacts with SREBF1, TLR2, TLR4, TLR9, PTPRZ1, APEX1, FEN1, POLB, TERT. Interacts with IL1B, AGER, MSH2, XPA, XPC, HNF1A, TP53. Interacts with CD24; the probable CD24:SIGLEC10 complex is proposed to inhibit HGMB1-mediated tissue damage immune response. Interacts with THBD; prevents HGMB1 interaction with ACER/RAGE and inhibits HGMB1 pro-inflammatory activity. Interacts with HAVCR2; impairs HMGB1 binding to B-DNA and likely HMGB1-mediated innate immune response. Interacts with XPO1; mediating nuclear export. Interacts with receptor RAGE/AGER. Phosphorylated at serine residues. Phosphorylation in both NLS regions is required for cytoplasmic translocation followed by secretion. Post-translationally, acetylated on multiple sites upon stimulation with LPS. Acetylation on lysine residues in the nuclear localization signals (NLS 1 and NLS 2) leads to cytoplasmic localization and subsequent secretion. Acetylation on Lys-3 results in preferential binding to DNA ends and impairs DNA bending activity. In terms of processing, reduction/oxidation of cysteine residues Cys-23, Cys-45 and Cys-106 and a possible intramolecular disulfide bond involving Cys-23 and Cys-45 give rise to different redox forms with specific functional activities in various cellular compartments: 1- fully reduced HMGB1 (HMGB1C23hC45hC106h), 2- disulfide HMGB1 (HMGB1C23-C45C106h) and 3- sulfonyl HMGB1 (HMGB1C23soC45soC106so). Poly-ADP-ribosylated by PARP1 when secreted following stimulation with LPS. Post-translationally, in vitro cleavage by CASP1 is liberating a HMG box 1-containing peptide which may mediate immunogenic activity; the peptide antagonizes apoptosis-induced immune tolerance. Can be proteolytically cleaved by a thrombin:thrombomodulin complex; reduces binding to heparin and pro-inflammatory activities. In terms of processing, forms covalent cross-links mediated by transglutaminase TGM2, between a glutamine and the epsilon-amino group of a lysine residue, forming homopolymers and heteropolymers.

The protein localises to the nucleus. Its subcellular location is the chromosome. It is found in the cytoplasm. The protein resides in the secreted. It localises to the cell membrane. The protein localises to the endosome. Its subcellular location is the endoplasmic reticulum-Golgi intermediate compartment. Its function is as follows. Multifunctional redox sensitive protein with various roles in different cellular compartments. In the nucleus is one of the major chromatin-associated non-histone proteins and acts as a DNA chaperone involved in replication, transcription, chromatin remodeling, V(D)J recombination, DNA repair and genome stability. Proposed to be an universal biosensor for nucleic acids. Promotes host inflammatory response to sterile and infectious signals and is involved in the coordination and integration of innate and adaptive immune responses. In the cytoplasm functions as a sensor and/or chaperone for immunogenic nucleic acids implicating the activation of TLR9-mediated immune responses, and mediates autophagy. Acts as a danger-associated molecular pattern (DAMP) molecule that amplifies immune responses during tissue injury. Released to the extracellular environment can bind DNA, nucleosomes, IL-1 beta, CXCL12, AGER isoform 2/sRAGE, lipopolysaccharide (LPS) and lipoteichoic acid (LTA), and activates cells through engagement of multiple surface receptors. In the extracellular compartment fully reduced HMGB1 (released by necrosis) acts as a chemokine, disulfide HMGB1 (actively secreted) as a cytokine, and sulfonyl HMGB1 (released from apoptotic cells) promotes immunological tolerance. Has proangiogenic activity. May be involved in platelet activation. Binds to phosphatidylserine and phosphatidylethanolamide. Bound to RAGE mediates signaling for neuronal outgrowth. May play a role in accumulation of expanded polyglutamine (polyQ) proteins. Functionally, nuclear functions are attributed to fully reduced HGMB1. Associates with chromatin and binds DNA with a preference to non-canonical DNA structures such as single-stranded DNA, DNA-containing cruciforms or bent structures, supercoiled DNA and ZDNA. Can bent DNA and enhance DNA flexibility by looping thus providing a mechanism to promote activities on various gene promoters by enhancing transcription factor binding and/or bringing distant regulatory sequences into close proximity. May be involved in nucleotide excision repair (NER), mismatch repair (MMR) and base excision repair (BER) pathways, and double strand break repair such as non-homologous end joining (NHEJ). Involved in V(D)J recombination by acting as a cofactor of the RAG complex: acts by stimulating cleavage and RAG protein binding at the 23 bp spacer of conserved recombination signal sequences (RSS). In vitro can displace histone H1 from highly bent DNA. Can restructure the canonical nucleosome leading to relaxation of structural constraints for transcription factor-binding. Enhances binding of sterol regulatory element-binding proteins (SREBPs) such as SREBF1 to their cognate DNA sequences and increases their transcriptional activities. Facilitates binding of TP53 to DNA. May be involved in mitochondrial quality control and autophagy in a transcription-dependent fashion implicating HSPB1. Can modulate the activity of the telomerase complex and may be involved in telomere maintenance. In terms of biological role, in the cytoplasm proposed to dissociate the BECN1:BCL2 complex via competitive interaction with BECN1 leading to autophagy activation. Can protect BECN1 and ATG5 from calpain-mediated cleavage and thus proposed to control their proautophagic and proapoptotic functions and to regulate the extent and severity of inflammation-associated cellular injury. In myeloid cells has a protective role against endotoxemia and bacterial infection by promoting autophagy. Involved in endosomal translocation and activation of TLR9 in response to CpG-DNA in macrophages. In the extracellular compartment (following either active secretion or passive release) involved in regulation of the inflammatory response. Fully reduced HGMB1 (which subsequently gets oxidized after release) in association with CXCL12 mediates the recruitment of inflammatory cells during the initial phase of tissue injury; the CXCL12:HMGB1 complex triggers CXCR4 homodimerization. Induces the migration of monocyte-derived immature dendritic cells and seems to regulate adhesive and migratory functions of neutrophils implicating AGER/RAGE and ITGAM. Can bind to various types of DNA and RNA including microbial unmethylated CpG-DNA to enhance the innate immune response to nucleic acids. Proposed to act in promiscuous DNA/RNA sensing which cooperates with subsequent discriminative sensing by specific pattern recognition receptors. Promotes extracellular DNA-induced AIM2 inflammasome activation implicating AGER/RAGE. Disulfide HMGB1 binds to transmembrane receptors, such as AGER/RAGE, TLR2, TLR4 and probably TREM1, thus activating their signal transduction pathways. Mediates the release of cytokines/chemokines such as TNF, IL-1, IL-6, IL-8, CCL2, CCL3, CCL4 and CXCL10. Promotes secretion of interferon-gamma by macrophage-stimulated natural killer (NK) cells in concert with other cytokines like IL-2 or IL-12. TLR4 is proposed to be the primary receptor promoting macrophage activation and signaling through TLR4 seems to implicate LY96/MD-2. In bacterial LPS- or LTA-mediated inflammatory responses binds to the endotoxins and transfers them to CD14 for signaling to the respective TLR4:LY96 and TLR2 complexes. Contributes to tumor proliferation by association with ACER/RAGE. Can bind to IL1-beta and signals through the IL1R1:IL1RAP receptor complex. Binding to class A CpG activates cytokine production in plasmacytoid dendritic cells implicating TLR9, MYD88 and AGER/RAGE and can activate autoreactive B cells. Via HMGB1-containing chromatin immune complexes may also promote B cell responses to endogenous TLR9 ligands through a B-cell receptor (BCR)-dependent and ACER/RAGE-independent mechanism. Inhibits phagocytosis of apoptotic cells by macrophages; the function is dependent on poly-ADP-ribosylation and involves binding to phosphatidylserine on the cell surface of apoptotic cells. In adaptive immunity may be involved in enhancing immunity through activation of effector T-cells and suppression of regulatory T (TReg) cells. In contrast, without implicating effector or regulatory T-cells, required for tumor infiltration and activation of T-cells expressing the lymphotoxin LTA:LTB heterotrimer thus promoting tumor malignant progression. Also reported to limit proliferation of T-cells. Released HMGB1:nucleosome complexes formed during apoptosis can signal through TLR2 to induce cytokine production. Involved in induction of immunological tolerance by apoptotic cells; its pro-inflammatory activities when released by apoptotic cells are neutralized by reactive oxygen species (ROS)-dependent oxidation specifically on Cys-106. During macrophage activation by activated lymphocyte-derived self apoptotic DNA (ALD-DNA) promotes recruitment of ALD-DNA to endosomes. This chain is High mobility group protein B1 (HMGB1), found in Canis lupus familiaris (Dog).